We begin with the raw amino-acid sequence, 186 residues long: ATP synthase subunit delta, chloroplastic (186 aa).

Belongs to the ATPase delta chain family. F-type ATPases have 2 components, F(1) - the catalytic core - and F(0) - the membrane proton channel. F(1) has five subunits: alpha(3), beta(3), gamma(1), delta(1), epsilon(1). CF(0) has four main subunits: a(1), b(1), b'(1) and c(10-14). The alpha and beta chains form an alternating ring which encloses part of the gamma chain. F(1) is attached to F(0) by a central stalk formed by the gamma and epsilon chains, while a peripheral stalk is formed by the delta, b and b' chains.

It localises to the plastid. The protein localises to the chloroplast thylakoid membrane. Its function is as follows. F(1)F(0) ATP synthase produces ATP from ADP in the presence of a proton or sodium gradient. F-type ATPases consist of two structural domains, F(1) containing the extramembraneous catalytic core and F(0) containing the membrane proton channel, linked together by a central stalk and a peripheral stalk. During catalysis, ATP synthesis in the catalytic domain of F(1) is coupled via a rotary mechanism of the central stalk subunits to proton translocation. In terms of biological role, this protein is part of the stalk that links CF(0) to CF(1). It either transmits conformational changes from CF(0) to CF(1) or is implicated in proton conduction. In Porphyra purpurea (Red seaweed), this protein is ATP synthase subunit delta, chloroplastic.